An 839-amino-acid polypeptide reads, in one-letter code: Taste receptor type 1 member 2 (839 aa).

The N-terminal stretch at 1 to 19 (MRPRATTICSLFFLLRVLA) is a signal peptide. Topologically, residues 20–566 (EPAKNSDFYL…AFLEWHEAPT (547 aa)) are extracellular. N-linked (GlcNAc...) asparagine glycosylation is found at N84, N127, N248, N292, N312, N368, N428, N487, and N527. A helical membrane pass occupies residues 567–587 (IVVALLAALGFLSTLAILVIF). Over 588–602 (WRHFQTPMVRSAGGP) the chain is Cytoplasmic. A helical membrane pass occupies residues 603 to 623 (MCFLMLTLLLVAYMVVPVYVG). Topologically, residues 624–635 (PPKVSTCFCRQA) are extracellular. The helical transmembrane segment at 636–656 (LFPLCFTICISCIAVRSFQIV) threads the bilayer. The Cytoplasmic portion of the chain corresponds to 657–681 (CVFKMASRFPRAYSYWVRYQGPYVS). The chain crosses the membrane as a helical span at residues 682–702 (MAFITVLKMVTVVIGMLATGL). At 703–727 (NPTTRIDPDDPKIMIVSCNPNYRNS) the chain is on the extracellular side. A helical membrane pass occupies residues 728 to 748 (LFFNTGLDLLLSVVGFSFAYM). Residues 749–760 (GKELPTNYNEAK) lie on the Cytoplasmic side of the membrane. The helical transmembrane segment at 761–781 (FITLSMTFYFTSSVSLCTFMS) threads the bilayer. The Extracellular portion of the chain corresponds to 782 to 784 (AYN). A helical transmembrane segment spans residues 785–805 (GVLVTIMDLLVTVLNLLAISL). Residues 806-839 (GYFGPKCYMILFYPERNTPAYFNSMIQGYTMRRD) lie on the Cytoplasmic side of the membrane.

This sequence belongs to the G-protein coupled receptor 3 family. TAS1R subfamily. Forms heterodimers with TAS1R3.

The protein resides in the cell membrane. In terms of biological role, putative taste receptor. TAS1R2/TAS1R3 recognizes diverse natural and synthetic sweeteners. This Macaca mulatta (Rhesus macaque) protein is Taste receptor type 1 member 2 (TAS1R2).